A 221-amino-acid chain; its full sequence is Iron-sulfur cluster repair protein YtfE (221 aa).

It belongs to the RIC family. YtfE subfamily. Homodimer.

Its subcellular location is the cytoplasm. Its function is as follows. Di-iron-containing protein involved in the repair of iron-sulfur clusters damaged by oxidative and nitrosative stress conditions. In Yersinia pseudotuberculosis serotype IB (strain PB1/+), this protein is Iron-sulfur cluster repair protein YtfE.